Here is a 116-residue protein sequence, read N- to C-terminus: Large ribosomal subunit protein uL18 (116 aa).

Belongs to the universal ribosomal protein uL18 family. In terms of assembly, part of the 50S ribosomal subunit; part of the 5S rRNA/L5/L18/L25 subcomplex. Contacts the 5S and 23S rRNAs.

This is one of the proteins that bind and probably mediate the attachment of the 5S RNA into the large ribosomal subunit, where it forms part of the central protuberance. The sequence is that of Large ribosomal subunit protein uL18 from Mycoplasma pneumoniae (strain ATCC 29342 / M129 / Subtype 1) (Mycoplasmoides pneumoniae).